The primary structure comprises 98 residues: C-X-C motif chemokine 10 (98 aa).

An N-terminal signal peptide occupies residues 1–21; that stretch reads MNQTAILICCLIFLTLSGIQG. Arg-26 bears the Citrulline; by PAD2 mark. Intrachain disulfides connect Cys-30/Cys-57 and Cys-32/Cys-74.

The protein belongs to the intercrine alpha (chemokine CxC) family. In terms of assembly, monomer, dimer, and tetramer. Interacts with CXCR3 (via N-terminus). Several proteases can mediate post-secretion cleavages. DPP4 cleaves CXCL10 on its N-terminal 2 amino acids leading to an antagonist form of CXCL10. This dominant negative form is capable of binding CXCR3 but does not induce signaling. MMP9 cleaves 9 amino acids instead. In terms of tissue distribution, mainly secreted by monocytes, endothelial cells as well as fibroblasts. Expressed by epithelial cells in thymus. Microglial cells produce CXCL10 in response to viral stimulation.

It is found in the secreted. Its function is as follows. Pro-inflammatory cytokine that is involved in a wide variety of processes such as chemotaxis, differentiation, and activation of peripheral immune cells, regulation of cell growth, apoptosis and modulation of angiostatic effects. Plays thereby an important role during viral infections by stimulating the activation and migration of immune cells to the infected sites. Mechanistically, binding of CXCL10 to the CXCR3 receptor activates G protein-mediated signaling and results in downstream activation of phospholipase C-dependent pathway, an increase in intracellular calcium production and actin reorganization. In turn, recruitment of activated Th1 lymphocytes occurs at sites of inflammation. Activation of the CXCL10/CXCR3 axis also plays an important role in neurons in response to brain injury for activating microglia, the resident macrophage population of the central nervous system, and directing them to the lesion site. This recruitment is an essential element for neuronal reorganization. This is C-X-C motif chemokine 10 (CXCL10) from Homo sapiens (Human).